We begin with the raw amino-acid sequence, 137 residues long: MLQPKRTKFRKTHKGRNRGLAQNGNKVSFGTFGLKATGRGRMTARQIEAARRAMTRHVKRQGKIWIRVFPDKPITNKPLEVRMGKGKGSVEYWVAEIQPGKVLYEMEGVSEELAREAFDLAARKLPFKTTFVTRTVM.

A compositionally biased stretch (basic residues) spans 1-17 (MLQPKRTKFRKTHKGRN). The interval 1-23 (MLQPKRTKFRKTHKGRNRGLAQN) is disordered.

The protein belongs to the universal ribosomal protein uL16 family. In terms of assembly, part of the 50S ribosomal subunit.

Functionally, binds 23S rRNA and is also seen to make contacts with the A and possibly P site tRNAs. This Pseudoalteromonas translucida (strain TAC 125) protein is Large ribosomal subunit protein uL16.